The sequence spans 251 residues: Small ribosomal subunit protein uS3 (251 aa).

A KH type-2 domain is found at 39–112 (IRKYINEVYA…NIILNVVEVR (74 aa)). Residues 222-251 (EEKKPAKKFNKKPVAAKPANKEEKSSKEVK) form a disordered region. The segment covering 240–251 (ANKEEKSSKEVK) has biased composition (basic and acidic residues).

Belongs to the universal ribosomal protein uS3 family. Part of the 30S ribosomal subunit. Forms a tight complex with proteins S10 and S14.

In terms of biological role, binds the lower part of the 30S subunit head. Binds mRNA in the 70S ribosome, positioning it for translation. This chain is Small ribosomal subunit protein uS3, found in Anaeroplasma abactoclasticum.